The sequence spans 100 residues: Ubiquitin-related modifier 1 (100 aa).

Gly-100 is subject to 1-thioglycine. Gly-100 participates in a covalent cross-link: Glycyl lysine isopeptide (Gly-Lys) (interchain with K-? in acceptor proteins).

The protein belongs to the URM1 family. In terms of processing, C-terminal thiocarboxylation occurs in 2 steps, it is first acyl-adenylated (-COAMP) via the hesA/moeB/thiF part of UBA4, then thiocarboxylated (-COSH) via the rhodanese domain of UBA4.

The protein resides in the cytoplasm. It participates in tRNA modification; 5-methoxycarbonylmethyl-2-thiouridine-tRNA biosynthesis. In terms of biological role, acts as a sulfur carrier required for 2-thiolation of mcm(5)S(2)U at tRNA wobble positions of cytosolic tRNA(Lys), tRNA(Glu) and tRNA(Gln). Serves as sulfur donor in tRNA 2-thiolation reaction by being thiocarboxylated (-COSH) at its C-terminus by the MOCS3 homolog UBA4. The sulfur is then transferred to tRNA to form 2-thiolation of mcm(5)S(2)U. Prior mcm(5) tRNA modification by the elongator complex is required for 2-thiolation. Also acts as a ubiquitin-like protein (UBL) that is covalently conjugated via an isopeptide bond to lysine residues of target proteins such as AHP1. The thiocarboxylated form serves as substrate for conjugation and oxidative stress specifically induces the formation of UBL-protein conjugates. The chain is Ubiquitin-related modifier 1 from Eremothecium gossypii (strain ATCC 10895 / CBS 109.51 / FGSC 9923 / NRRL Y-1056) (Yeast).